The sequence spans 22 residues: Unknown endosperm protein L (22 aa).

Residues 1–11 show a composition bias toward basic and acidic residues; it reads MRHSNKIRDEE. The interval 1–22 is disordered; sequence MRHSNKIRDEEMVNNTRLNXXA. Positions 13 to 22 are enriched in polar residues; it reads VNNTRLNXXA.

Post-translationally, the N-terminus is blocked.

The protein is Unknown endosperm protein L of Hordeum vulgare (Barley).